The sequence spans 334 residues: HTH-type transcriptional repressor PurR (334 aa).

The HTH lacI-type domain occupies 2-56 (ATIKDVARLAGVSTTTVSHVINKTRFVAEATQEKVMKAVDELNYAPSAVARSLKC). Positions 4–23 (IKDVARLAGVSTTTVSHVIN) form a DNA-binding region, H-T-H motif. A DNA-binding region spans residues 48 to 56 (SAVARSLKC). Residues F73, K189, F220, and D274 each contribute to the hypoxanthine site.

As to quaternary structure, homodimer.

It functions in the pathway purine metabolism; purine nucleotide biosynthesis [regulation]. Is the main repressor of the genes involved in the de novo synthesis of purine nucleotides, regulating purB, purC, purEK, purF, purHD, purL, purMN and guaBA expression. PurR is allosterically activated to bind its cognate DNA by binding the purine corepressors, hypoxanthine or guanine, thereby effecting transcription repression. The protein is HTH-type transcriptional repressor PurR of Vibrio parahaemolyticus serotype O3:K6 (strain RIMD 2210633).